Consider the following 595-residue polypeptide: Sorting nexin-9 (595 aa).

One can recognise an SH3 domain in the interval 1–62 (MATKARVMYD…PTDYVEILPS (62 aa)). Positions 91 to 201 (SSSAASNNHQ…GNSRASSSSM (111 aa)) are disordered. Polar residues-rich tracts occupy residues 111–121 (WSASKSGNWES) and 135–145 (QRNTNTPNNWD). Phosphoserine is present on residues Ser-116 and Ser-121. Residues 160 to 169 (GDDDDWDEDW) show a composition bias toward acidic residues. A compositionally biased stretch (polar residues) spans 191–201 (RGNSRASSSSM). Residues Ser-197 and Ser-200 each carry the phosphoserine modification. The segment at 201–213 (MKIPLNKFPGFAK) is critical for tubulation activity. Residue Thr-216 is modified to Phosphothreonine. Tyr-239 is subject to Phosphotyrosine. The PX domain maps to 250 to 361 (FDCVVADPRK…QFLNFRDEKE (112 aa)). A 1,2-diacyl-sn-glycero-3-phospho-(1D-myo-inositol-4,5-bisphosphate) contacts are provided by Arg-286, Lys-288, and Arg-327. Lys-288 carries the post-translational modification N6-acetyllysine. Residues 392–595 (LVEIEQKCEA…RQALSRFPVM (204 aa)) enclose the BAR domain.

This sequence belongs to the sorting nexin family. In terms of assembly, homodimer, and homooligomer. Heterodimer with SNX18. Interacts with ITCH. Interacts (via SH3 domain) with TNK2, WASL and ACTR3. Identified in a complex with TNK2 and clathrin heavy chains. Identified in a complex with the AP-2 complex, clathrin and DNM2. Interacts (via SH3 domain) with DNM1 and DNM2. Identified in an oligomeric complex containing DNM1 and SNX9. Interacts with FCHSD1. Interacts with ADAM9 and ADAM15 cytoplasmic tails. Ubiquitinated by ITCH. In terms of processing, phosphorylated on tyrosine residues by TNK2. Phosphorylation promotes its activity in the degradation of EGFR. Widely expressed, with highest levels in heart and placenta, and lowest levels in thymus and peripheral blood leukocytes.

The protein resides in the cytoplasmic vesicle membrane. It localises to the cell membrane. It is found in the cytoplasmic vesicle. The protein localises to the clathrin-coated vesicle. Its subcellular location is the golgi apparatus. The protein resides in the trans-Golgi network. It localises to the cell projection. It is found in the ruffle. The protein localises to the cytoplasm. Its function is as follows. Involved in endocytosis and intracellular vesicle trafficking, both during interphase and at the end of mitosis. Required for efficient progress through mitosis and cytokinesis. Required for normal formation of the cleavage furrow at the end of mitosis. Plays a role in endocytosis via clathrin-coated pits, but also clathrin-independent, actin-dependent fluid-phase endocytosis. Plays a role in macropinocytosis. Promotes internalization of TNFR. Promotes degradation of EGFR after EGF signaling. Stimulates the GTPase activity of DNM1. Promotes DNM1 oligomerization. Promotes activation of the Arp2/3 complex by WASL, and thereby plays a role in the reorganization of the F-actin cytoskeleton. Binds to membranes enriched in phosphatidylinositol 4,5-bisphosphate and promotes membrane tubulation. Has lower affinity for membranes enriched in phosphatidylinositol 3-phosphate. The protein is Sorting nexin-9 (SNX9) of Homo sapiens (Human).